We begin with the raw amino-acid sequence, 139 residues long: Small ribosomal subunit protein uS12 (139 aa).

The segment at 119-139 (GVDKRRQQRSAYGAKKPKPKS) is disordered.

The protein belongs to the universal ribosomal protein uS12 family. Part of the 30S ribosomal subunit. Contacts proteins S8 and S17. May interact with IF1 in the 30S initiation complex.

Functionally, with S4 and S5 plays an important role in translational accuracy. Its function is as follows. Interacts with and stabilizes bases of the 16S rRNA that are involved in tRNA selection in the A site and with the mRNA backbone. Located at the interface of the 30S and 50S subunits, it traverses the body of the 30S subunit contacting proteins on the other side and probably holding the rRNA structure together. The combined cluster of proteins S8, S12 and S17 appears to hold together the shoulder and platform of the 30S subunit. This chain is Small ribosomal subunit protein uS12, found in Mycoplasma genitalium (strain ATCC 33530 / DSM 19775 / NCTC 10195 / G37) (Mycoplasmoides genitalium).